Consider the following 73-residue polypeptide: Exodeoxyribonuclease 7 small subunit (73 aa).

This sequence belongs to the XseB family. As to quaternary structure, heterooligomer composed of large and small subunits.

It localises to the cytoplasm. It catalyses the reaction Exonucleolytic cleavage in either 5'- to 3'- or 3'- to 5'-direction to yield nucleoside 5'-phosphates.. Bidirectionally degrades single-stranded DNA into large acid-insoluble oligonucleotides, which are then degraded further into small acid-soluble oligonucleotides. The sequence is that of Exodeoxyribonuclease 7 small subunit from Streptococcus mutans serotype c (strain ATCC 700610 / UA159).